We begin with the raw amino-acid sequence, 405 residues long: MASATFSVAKPAIKANGKGFSEFSGLRNSSRHLPFSRKSSDDFHSLVTFQTNAVGSSGGHKKSLVVEAKQLKVAINGFGRIGRNFLRCWHGRKDSPLDVIAINDTGGVKQASHLLKYDSTLGIFDADVKPVGTDGISVDGKVIKVVSDRNPANLPWKELGIDLVIEGTGVFVDREGAGRHITAGAKKVLITAPGKGDIPTYVVGVNADAYTHADDIISNASCTTNCLAPFVKVLDQKFGIIKGTMTTTHSYTGDQRLLDASHRDLRRARAAALNIVPTSTGAAKAVALVLPTLKGKLNGIALRVPTPNVSVVDLVVQVSKKTFAEEVNEAFRESAAKELTGILSVCDEPLVSVDFRCTDVSSTVDSSLTMVMGDDLVKVIAWYDNEWGYSQRVVDLADIVANNWK.

A chloroplast-targeting transit peptide spans M1 to A68. NADP(+) is bound by residues R80–I81, D104, and R149. D-glyceraldehyde 3-phosphate-binding positions include S221 to T223, T252, R267, T280 to G281, and R303. C222 functions as the Nucleophile in the catalytic mechanism. N385 serves as a coordination point for NADP(+).

Belongs to the glyceraldehyde-3-phosphate dehydrogenase family. As to quaternary structure, tetramer of either four A chains (GAPDH 2) or two A and two B chains (GAPDH 1).

Its subcellular location is the plastid. The protein localises to the chloroplast. The enzyme catalyses D-glyceraldehyde 3-phosphate + phosphate + NADP(+) = (2R)-3-phospho-glyceroyl phosphate + NADPH + H(+). Its pathway is carbohydrate biosynthesis; Calvin cycle. This chain is Glyceraldehyde-3-phosphate dehydrogenase A, chloroplastic (GAPA), found in Pisum sativum (Garden pea).